A 28-amino-acid polypeptide reads, in one-letter code: Aspartate aminotransferase, mitochondrial (28 aa).

Belongs to the class-I pyridoxal-phosphate-dependent aminotransferase family. As to quaternary structure, homodimer. The cofactor is pyridoxal 5'-phosphate.

The protein resides in the mitochondrion matrix. The enzyme catalyses L-aspartate + 2-oxoglutarate = oxaloacetate + L-glutamate. Plays a key role in amino acid metabolism. Important for metabolite exchange between mitochondria and cytosol. In Catharanthus roseus (Madagascar periwinkle), this protein is Aspartate aminotransferase, mitochondrial.